A 331-amino-acid chain; its full sequence is Acyl-CoA desaturase 1 (331 aa).

At 1–46 (MTEVDDGCGGRLRGSVLLEDECDLKQECETPTHSLVQGRDPPVVVV) the chain is on the cytoplasmic side. A helical membrane pass occupies residues 47 to 67 (WRNVVLMSVLHTAAVYGLVLL). Position 49 (N49) interacts with substrate. At 68 to 71 (PSAS) the chain is on the lumenal side. Residues 72-90 (AYTLLAFCFVSSALGITAG) form a helical membrane-spanning segment. At 91 to 189 (AHRLWSHRSY…DRVVMFQRRF (99 aa)) the chain is on the cytoplasmic side. Residues H92 and H97 each contribute to the Fe cation site. The Histidine box-1 motif lies at 92–97 (HRLWSH). Residues N120, R127, and D128 each contribute to the substrate site. 3 residues coordinate Fe cation: H129, H132, and H133. The Histidine box-2 motif lies at 129-133 (HRVHH). K161 contacts substrate. Residues 190–209 (YKHSVVVMCFLIPAMLPWFL) form a helical membrane-spanning segment. Residues 210–213 (WAES) are Lumenal-facing. The helical transmembrane segment at 214-235 (LWVGYFVPVLLRYALVLNATWL) threads the bilayer. W234 provides a ligand contact to substrate. The Cytoplasmic segment spans residues 236–331 (VNSAAHMWGN…RTGDGSHRSG (96 aa)). Fe cation-binding residues include H241, H270, H273, and H274. The short motif at 270-274 (HNYHH) is the Histidine box-3 element.

It belongs to the fatty acid desaturase type 1 family. Requires Fe(2+) as cofactor. In terms of tissue distribution, expression is highest in liver, followed by brain and intestine, and lowest in spleen. Also expressed in heart, gill and muscle.

It is found in the endoplasmic reticulum membrane. It catalyses the reaction octadecanoyl-CoA + 2 Fe(II)-[cytochrome b5] + O2 + 2 H(+) = (9Z)-octadecenoyl-CoA + 2 Fe(III)-[cytochrome b5] + 2 H2O. Functionally, stearoyl-CoA desaturase that utilizes O(2) and electrons from reduced cytochrome b5 to introduce the first double bond into saturated fatty acyl-CoA substrates. Catalyzes the insertion of a cis double bond at the delta-9 position into fatty acyl-CoA substrates including palmitoyl-CoA and stearoyl-CoA. Contributes to the biosynthesis of membrane phospholipids, cholesterol esters and triglycerides. This chain is Acyl-CoA desaturase 1, found in Tachysurus fulvidraco (Yellow catfish).